The chain runs to 171 residues: 3-hydroxydecanoyl-[acyl-carrier-protein] dehydratase (171 aa).

Residue His-70 is part of the active site.

Belongs to the thioester dehydratase family. FabA subfamily. Homodimer.

It localises to the cytoplasm. The enzyme catalyses a (3R)-hydroxyacyl-[ACP] = a (2E)-enoyl-[ACP] + H2O. The catalysed reaction is (3R)-hydroxydecanoyl-[ACP] = (2E)-decenoyl-[ACP] + H2O. It carries out the reaction (2E)-decenoyl-[ACP] = (3Z)-decenoyl-[ACP]. It functions in the pathway lipid metabolism; fatty acid biosynthesis. Functionally, necessary for the introduction of cis unsaturation into fatty acids. Catalyzes the dehydration of (3R)-3-hydroxydecanoyl-ACP to E-(2)-decenoyl-ACP and then its isomerization to Z-(3)-decenoyl-ACP. Can catalyze the dehydratase reaction for beta-hydroxyacyl-ACPs with saturated chain lengths up to 16:0, being most active on intermediate chain length. This Marinomonas sp. (strain MWYL1) protein is 3-hydroxydecanoyl-[acyl-carrier-protein] dehydratase.